The chain runs to 208 residues: Ribonuclease HII (208 aa).

In terms of domain architecture, RNase H type-2 spans 12-201; the sequence is ELVAGVDEVG…VRALLEPVAV (190 aa). Residues D18, E19, and D110 each coordinate a divalent metal cation.

This sequence belongs to the RNase HII family. Mn(2+) serves as cofactor. It depends on Mg(2+) as a cofactor.

Its subcellular location is the cytoplasm. It catalyses the reaction Endonucleolytic cleavage to 5'-phosphomonoester.. Its function is as follows. Endonuclease that specifically degrades the RNA of RNA-DNA hybrids. This chain is Ribonuclease HII, found in Ectopseudomonas mendocina (strain ymp) (Pseudomonas mendocina).